Consider the following 186-residue polypeptide: Translation initiation factor IF-3 (186 aa).

The segment at 1-21 (MINRSSGKDRDRSRSGDKELR) is disordered.

The protein belongs to the IF-3 family. Monomer.

It localises to the cytoplasm. Its function is as follows. IF-3 binds to the 30S ribosomal subunit and shifts the equilibrium between 70S ribosomes and their 50S and 30S subunits in favor of the free subunits, thus enhancing the availability of 30S subunits on which protein synthesis initiation begins. This Borrelia turicatae (strain 91E135) protein is Translation initiation factor IF-3.